The chain runs to 474 residues: Lysosomal protective protein (474 aa).

The first 23 residues, 1-23, serve as a signal peptide directing secretion; that stretch reads MPGTALSPLLLLLLLSWASRNEA. 4 disulfides stabilise this stretch: cysteine 83–cysteine 356, cysteine 235–cysteine 251, cysteine 236–cysteine 241, and cysteine 276–cysteine 325. Asparagine 140 is a glycosylation site (N-linked (GlcNAc...) (high mannose) asparagine). Serine 173 is an active-site residue. N-linked (GlcNAc...) (high mannose) asparagine glycosylation occurs at asparagine 327. Active-site residues include aspartate 394 and histidine 451.

It belongs to the peptidase S10 family. As to quaternary structure, heterodimer of a 32 kDa chain and a 20 kDa chain; disulfide-linked.

The protein localises to the lysosome. It catalyses the reaction Release of a C-terminal amino acid with broad specificity.. In terms of biological role, protective protein appears to be essential for both the activity of beta-galactosidase and neuraminidase, it associates with these enzymes and exerts a protective function necessary for their stability and activity. This protein is also a carboxypeptidase and can deamidate tachykinins. The chain is Lysosomal protective protein (Ctsa) from Mus musculus (Mouse).